Consider the following 9439-residue polypeptide: Extracellular matrix-binding protein ebh (9439 aa).

FIVAR domains are found at residues 1815-1871 (ARRR…VNSA), 1901-1957 (AKEQ…INDA), 1985-2041 (AYDT…VRDA), 2071-2127 (AKKR…ITSE), 2155-2211 (AYNK…VTQA), 2241-2297 (AKNR…ISSE), 2325-2381 (AYNK…VEDA), 2411-2467 (AKEK…ITEN), 2488-2551 (DTTS…VNNA), 2581-2638 (ARNR…STEI), 2665-2720 (AKNQ…IRTN), 2748-2804 (AKTA…VSDE), 2832-2888 (AYNQ…VNNA), 2918-2974 (AKEQ…ISNA), 3002-3058 (AYNQ…VTAA), 3088-3144 (AKQQ…ITNE), 3172-3228 (AYNQ…VAQA), 3258-3314 (AKNQ…ISDE), 3335-3398 (DTTE…VNNA), 3428-3484 (ARLN…ITTE), 3512-3567 (AKTA…IKTN), 3595-3650 (IKRQ…VKES), 3678-3733 (AKNR…IRQN), 3802-3860 (SMTA…IDQK), 3928-3983 (AMTQ…LDPA), 4056-4114 (AMQA…VNQK), 4182-4240 (SMGT…VDNA), 4308-4365 (AMHT…INQK), 4433-4491 (VMEQ…IEQA), and 4559-4617 (SMQT…IDQT). Residues 2495 to 2507 (EVRKLSRRGDTNN) show a composition bias toward basic and acidic residues. The interval 2495 to 2514 (EVRKLSRRGDTNNKKPSSVS) is disordered. A compositionally biased stretch (polar residues) spans 2925–2938 (AVDQVPSTEGMTQQ). The disordered stretch occupies residues 2925–2951 (AVDQVPSTEGMTQQTKDDYNSKQQAAQ). The interval 4649–4674 (GYLNDPQKSGEESLVNGSNTRSEVEE) is disordered. FIVAR domains lie at 4685–4743 (AMKQ…IEQK), 4811–4869 (AMQA…IEQA), 4937–4995 (AMSN…IEQA), 5063–5115 (AMEA…VLDK), 5189–5246 (AMLG…INQL), 5314–5372 (LMGA…VTTA), 5440–5498 (AMGE…IDQA), 5566–5624 (AMKK…ITNA), 5692–5750 (AMKQ…IADT), 5818–5875 (DMST…LQDL), 5943–6000 (AMKA…IKQA), 6068–6126 (KMEE…INRT), 6194–6252 (AMQQ…IQAI), and 6320–6378 (EMGT…IADA). The span at 5699–5712 (QVNQDDQISNSSPF) shows a compositional bias: polar residues. The segment at 5699-5719 (QVNQDDQISNSSPFINEDSDK) is disordered. A disordered region spans residues 6413–6434 (NNSQRQSEHDEINSAPSRTEVS). FIVAR domains lie at 6446-6504 (AMRQ…IEDA), 6572-6630 (AMKA…INRA), 6698-6755 (SMNQ…IDQA), 6823-6877 (TMKA…ANDE), 6949-7007 (AMKK…INTI), 7075-7133 (SMNT…VERA), 7201-7259 (DMKK…IENA), 7327-7384 (AMKH…IKQL), 7452-7510 (AMEN…IEHA), 7578-7636 (AMKA…INSI), 7704-7762 (AMET…VDIV), 7830-7888 (AMKS…VRQA), 7956-8010 (VMGK…TKQA), 8078-8137 (IMGE…IDTF), 8205-8264 (AMKS…IQGL), 8332-8391 (AMKD…VLGL), 8459-8518 (KMKL…IQHL), and 8587-8643 (AMQG…ANII). A helical membrane pass occupies residues 9306 to 9324 (TVGVITLTGLLSSFWLVLA). Composition is skewed to basic and acidic residues over residues 9363 to 9375 (DKEE…DKHS), 9386 to 9395 (EKQLSEEDIH), and 9404 to 9413 (QNSDNKDTKQ). The disordered stretch occupies residues 9363-9439 (DKEEQIQNDD…VVKTKKRSKK (77 aa)). A compositionally biased stretch (basic residues) spans 9414-9439 (KKVTSKKKKTPQSTKKVVKTKKRSKK).

The protein resides in the cell membrane. The polypeptide is Extracellular matrix-binding protein ebh (ebh) (Staphylococcus epidermidis (strain ATCC 12228 / FDA PCI 1200)).